Reading from the N-terminus, the 230-residue chain is Ribonuclease 3 (230 aa).

In terms of domain architecture, RNase III spans Asp-10 to Ser-133. Residue Glu-46 coordinates Mg(2+). Asp-50 is an active-site residue. 2 residues coordinate Mg(2+): Asp-119 and Glu-122. Glu-122 is a catalytic residue. The 70-residue stretch at Asp-161–Gln-230 folds into the DRBM domain.

It belongs to the ribonuclease III family. In terms of assembly, homodimer. Mg(2+) serves as cofactor.

The protein localises to the cytoplasm. The enzyme catalyses Endonucleolytic cleavage to 5'-phosphomonoester.. In terms of biological role, digests double-stranded RNA. Involved in the processing of primary rRNA transcript to yield the immediate precursors to the large and small rRNAs (23S and 16S). Processes some mRNAs, and tRNAs when they are encoded in the rRNA operon. Processes pre-crRNA and tracrRNA of type II CRISPR loci if present in the organism. The polypeptide is Ribonuclease 3 (rnc) (Acinetobacter baumannii (strain AB307-0294)).